Here is a 365-residue protein sequence, read N- to C-terminus: Zinc finger protein lsy-2 (365 aa).

Residues 1 to 36 (MLTRRNAKQSQRNSADQSLSEFNSSSMTHGSNQSVY) form a disordered region. Over residues 8–36 (KQSQRNSADQSLSEFNSSSMTHGSNQSVY) the composition is skewed to polar residues. 5 consecutive C2H2-type zinc fingers follow at residues 78–100 (HQCNVCNKIFVSYKGLQQHAVIH), 106–128 (FRCDICSKSFRFKSNLFEHRSVH), 134–156 (HACPYCGKTCRLKGNLKKHLRTH), 264–287 (HDCPVCKSQFMTRMDCVSHHTLEH), and 296–318 (FFCEKCYRPFADEASYNQHMSYH).

The protein localises to the nucleus speckle. Involved in transcriptional regulation. Required to specify left-right asymmetry of the ASE gustatory neurons, probably acting upstream of microRNA lsy-6. Involved in maintaining the distinction between somatic and germ cells, perhaps acting by repressing germ cell-specific genes in somatic cells. The sequence is that of Zinc finger protein lsy-2 from Caenorhabditis elegans.